A 271-amino-acid chain; its full sequence is 3-methyl-2-oxobutanoate hydroxymethyltransferase (271 aa).

Asp51 and Asp90 together coordinate Mg(2+). Residues Asp51–Ser52, Asp90, and Lys118 contribute to the 3-methyl-2-oxobutanoate site. Glu120 provides a ligand contact to Mg(2+). Glu186 (proton acceptor) is an active-site residue.

Belongs to the PanB family. Homodecamer; pentamer of dimers. Mg(2+) is required as a cofactor.

Its subcellular location is the cytoplasm. The catalysed reaction is 3-methyl-2-oxobutanoate + (6R)-5,10-methylene-5,6,7,8-tetrahydrofolate + H2O = 2-dehydropantoate + (6S)-5,6,7,8-tetrahydrofolate. Its pathway is cofactor biosynthesis; (R)-pantothenate biosynthesis; (R)-pantoate from 3-methyl-2-oxobutanoate: step 1/2. Catalyzes the reversible reaction in which hydroxymethyl group from 5,10-methylenetetrahydrofolate is transferred onto alpha-ketoisovalerate to form ketopantoate. This chain is 3-methyl-2-oxobutanoate hydroxymethyltransferase, found in Xanthomonas euvesicatoria pv. vesicatoria (strain 85-10) (Xanthomonas campestris pv. vesicatoria).